The sequence spans 913 residues: Valine--tRNA ligase (913 aa).

Residues 48–58 (PNVTGSLHMGH) carry the 'HIGH' region motif. A 'KMSKS' region motif is present at residues 541-545 (KMSKS). Lysine 544 contacts ATP. A coiled-coil region spans residues 839-907 (VVDLEALVSK…IEHRLQSLGV (69 aa)).

It belongs to the class-I aminoacyl-tRNA synthetase family. ValS type 1 subfamily. Monomer.

Its subcellular location is the cytoplasm. The catalysed reaction is tRNA(Val) + L-valine + ATP = L-valyl-tRNA(Val) + AMP + diphosphate. Its function is as follows. Catalyzes the attachment of valine to tRNA(Val). As ValRS can inadvertently accommodate and process structurally similar amino acids such as threonine, to avoid such errors, it has a 'posttransfer' editing activity that hydrolyzes mischarged Thr-tRNA(Val) in a tRNA-dependent manner. The sequence is that of Valine--tRNA ligase from Thermosynechococcus vestitus (strain NIES-2133 / IAM M-273 / BP-1).